A 313-amino-acid polypeptide reads, in one-letter code: tRNA dimethylallyltransferase (313 aa).

Position 9–16 (9–16 (GPTATGKS)) interacts with ATP. 11 to 16 (TATGKS) contacts substrate.

The protein belongs to the IPP transferase family. Monomer. The cofactor is Mg(2+).

The enzyme catalyses adenosine(37) in tRNA + dimethylallyl diphosphate = N(6)-dimethylallyladenosine(37) in tRNA + diphosphate. Functionally, catalyzes the transfer of a dimethylallyl group onto the adenine at position 37 in tRNAs that read codons beginning with uridine, leading to the formation of N6-(dimethylallyl)adenosine (i(6)A). The chain is tRNA dimethylallyltransferase from Mycobacteroides abscessus (strain ATCC 19977 / DSM 44196 / CCUG 20993 / CIP 104536 / JCM 13569 / NCTC 13031 / TMC 1543 / L948) (Mycobacterium abscessus).